The following is a 238-amino-acid chain: uncharacterized protein (238 aa).

The protein belongs to the chlamydial CPn_0658/CT_538/TC_0825 family.

This is an uncharacterized protein from Chlamydia trachomatis serovar D (strain ATCC VR-885 / DSM 19411 / UW-3/Cx).